Consider the following 169-residue polypeptide: NAD(P)H-quinone oxidoreductase subunit J, chloroplastic (169 aa).

This sequence belongs to the complex I 30 kDa subunit family. NDH is composed of at least 16 different subunits, 5 of which are encoded in the nucleus.

The protein localises to the plastid. It localises to the chloroplast thylakoid membrane. The enzyme catalyses a plastoquinone + NADH + (n+1) H(+)(in) = a plastoquinol + NAD(+) + n H(+)(out). It catalyses the reaction a plastoquinone + NADPH + (n+1) H(+)(in) = a plastoquinol + NADP(+) + n H(+)(out). Its function is as follows. NDH shuttles electrons from NAD(P)H:plastoquinone, via FMN and iron-sulfur (Fe-S) centers, to quinones in the photosynthetic chain and possibly in a chloroplast respiratory chain. The immediate electron acceptor for the enzyme in this species is believed to be plastoquinone. Couples the redox reaction to proton translocation, and thus conserves the redox energy in a proton gradient. The protein is NAD(P)H-quinone oxidoreductase subunit J, chloroplastic of Zygnema circumcarinatum (Green alga).